The sequence spans 105 residues: Small ribosomal subunit protein bS20 (105 aa).

It belongs to the bacterial ribosomal protein bS20 family.

Functionally, binds directly to 16S ribosomal RNA. The protein is Small ribosomal subunit protein bS20 of Caldanaerobacter subterraneus subsp. tengcongensis (strain DSM 15242 / JCM 11007 / NBRC 100824 / MB4) (Thermoanaerobacter tengcongensis).